Consider the following 206-residue polypeptide: Large ribosomal subunit protein uL4 (206 aa).

The disordered stretch occupies residues 47 to 94; it reads NRAQKGRSEIAKSTRKPFRQKGTGNARAGMASSPLWRGGGKIFPNSPD.

This sequence belongs to the universal ribosomal protein uL4 family. Part of the 50S ribosomal subunit.

Functionally, one of the primary rRNA binding proteins, this protein initially binds near the 5'-end of the 23S rRNA. It is important during the early stages of 50S assembly. It makes multiple contacts with different domains of the 23S rRNA in the assembled 50S subunit and ribosome. Its function is as follows. Forms part of the polypeptide exit tunnel. In Azoarcus sp. (strain BH72), this protein is Large ribosomal subunit protein uL4.